Here is a 320-residue protein sequence, read N- to C-terminus: Lipoyl synthase (320 aa).

The disordered stretch occupies residues 1-26; that stretch reads MVTVVDRVTSRRLRHPEKMHRPDTSI. Residues C59, C64, C70, C85, C89, C92, and S298 each contribute to the [4Fe-4S] cluster site. Residues 71–287 form the Radical SAM core domain; the sequence is WSQRHASFMI…AKIGKVKGFL (217 aa).

The protein belongs to the radical SAM superfamily. Lipoyl synthase family. Requires [4Fe-4S] cluster as cofactor.

The protein resides in the cytoplasm. It carries out the reaction [[Fe-S] cluster scaffold protein carrying a second [4Fe-4S](2+) cluster] + N(6)-octanoyl-L-lysyl-[protein] + 2 oxidized [2Fe-2S]-[ferredoxin] + 2 S-adenosyl-L-methionine + 4 H(+) = [[Fe-S] cluster scaffold protein] + N(6)-[(R)-dihydrolipoyl]-L-lysyl-[protein] + 4 Fe(3+) + 2 hydrogen sulfide + 2 5'-deoxyadenosine + 2 L-methionine + 2 reduced [2Fe-2S]-[ferredoxin]. It functions in the pathway protein modification; protein lipoylation via endogenous pathway; protein N(6)-(lipoyl)lysine from octanoyl-[acyl-carrier-protein]: step 2/2. Functionally, catalyzes the radical-mediated insertion of two sulfur atoms into the C-6 and C-8 positions of the octanoyl moiety bound to the lipoyl domains of lipoate-dependent enzymes, thereby converting the octanoylated domains into lipoylated derivatives. The chain is Lipoyl synthase from Bartonella quintana (strain Toulouse) (Rochalimaea quintana).